The sequence spans 601 residues: Deoxyhypusine synthase (601 aa).

Residues 109-113 (ANLMG) and 184-186 (SGG) each bind NAD(+). 189 to 190 (EH) provides a ligand contact to spermidine. The interval 210–242 (GHVSSTVSSEATAPPKGLQQRAEKPLGTRAAAG) is disordered. Polar residues predominate over residues 211-220 (HVSSTVSSEA). Residue aspartate 398 coordinates NAD(+). A disordered region spans residues 411-451 (PAARPAHRKGGPVADENAGNSKELKRSRKASSSSSTSATAV). Residues 440-451 (ASSSSSTSATAV) are compositionally biased toward low complexity. Glycine 489 serves as a coordination point for NAD(+). Spermidine is bound at residue histidine 494. 514–515 (NG) provides a ligand contact to NAD(+). Residues 520 to 522 (GSD) and 529 to 535 (EALSWGK) contribute to the spermidine site. Lysine 535 serves as the catalytic Nucleophile. 548-549 (EV) is an NAD(+) binding site. A disordered region spans residues 568–601 (RRATDDAQPRRKRSSRGARPPQDVSGHSHLCRGE).

It belongs to the deoxyhypusine synthase family. Homodimer. NAD(+) serves as cofactor.

It catalyses the reaction [eIF5A protein]-L-lysine + spermidine = [eIF5A protein]-deoxyhypusine + propane-1,3-diamine. Its pathway is protein modification; eIF5A hypusination. N1-guanyl-1,7-diaminoheptane has a small inhibitory effect on activity. Its function is as follows. Catalyzes the NAD-dependent oxidative cleavage of spermidine and the subsequent transfer of the butylamine moiety of spermidine to the epsilon-amino group of a specific lysine residue of the eIF-5A precursor protein to form the intermediate deoxyhypusine residue. This is Deoxyhypusine synthase from Leishmania donovani.